The sequence spans 383 residues: Queuine tRNA-ribosyltransferase (383 aa).

The Proton acceptor role is filled by Asp92. Residues 92–96 (DSGGF), Asp146, Gln190, and Gly217 contribute to the substrate site. The segment at 248–254 (GVGKPED) is RNA binding. Asp267 serves as the catalytic Nucleophile. Residues 272 to 276 (TRNAR) are RNA binding; important for wobble base 34 recognition. Zn(2+)-binding residues include Cys310, Cys312, Cys315, and His341.

Belongs to the queuine tRNA-ribosyltransferase family. In terms of assembly, homodimer. Within each dimer, one monomer is responsible for RNA recognition and catalysis, while the other monomer binds to the replacement base PreQ1. It depends on Zn(2+) as a cofactor.

The catalysed reaction is 7-aminomethyl-7-carbaguanine + guanosine(34) in tRNA = 7-aminomethyl-7-carbaguanosine(34) in tRNA + guanine. Its pathway is tRNA modification; tRNA-queuosine biosynthesis. Functionally, catalyzes the base-exchange of a guanine (G) residue with the queuine precursor 7-aminomethyl-7-deazaguanine (PreQ1) at position 34 (anticodon wobble position) in tRNAs with GU(N) anticodons (tRNA-Asp, -Asn, -His and -Tyr). Catalysis occurs through a double-displacement mechanism. The nucleophile active site attacks the C1' of nucleotide 34 to detach the guanine base from the RNA, forming a covalent enzyme-RNA intermediate. The proton acceptor active site deprotonates the incoming PreQ1, allowing a nucleophilic attack on the C1' of the ribose to form the product. After dissociation, two additional enzymatic reactions on the tRNA convert PreQ1 to queuine (Q), resulting in the hypermodified nucleoside queuosine (7-(((4,5-cis-dihydroxy-2-cyclopenten-1-yl)amino)methyl)-7-deazaguanosine). The chain is Queuine tRNA-ribosyltransferase from Psychrobacter cryohalolentis (strain ATCC BAA-1226 / DSM 17306 / VKM B-2378 / K5).